Here is a 196-residue protein sequence, read N- to C-terminus: Anthranilate synthase component 2 (196 aa).

The Glutamine amidotransferase type-1 domain maps to 4-196; it reads LILIIDNYDS…RDILENFLRM (193 aa). Residue 60 to 62 participates in L-glutamine binding; the sequence is GPG. Catalysis depends on cysteine 89, which acts as the Nucleophile; for GATase activity. Residues glutamine 93 and 138-139 contribute to the L-glutamine site; that span reads SL. Catalysis depends on for GATase activity residues histidine 177 and glutamate 179.

In terms of assembly, heterotetramer consisting of two non-identical subunits: a beta subunit (TrpG) and a large alpha subunit (TrpE).

It carries out the reaction chorismate + L-glutamine = anthranilate + pyruvate + L-glutamate + H(+). It participates in amino-acid biosynthesis; L-tryptophan biosynthesis; L-tryptophan from chorismate: step 1/5. Its function is as follows. Part of a heterotetrameric complex that catalyzes the two-step biosynthesis of anthranilate, an intermediate in the biosynthesis of L-tryptophan. In the first step, the glutamine-binding beta subunit (TrpG) of anthranilate synthase (AS) provides the glutamine amidotransferase activity which generates ammonia as a substrate that, along with chorismate, is used in the second step, catalyzed by the large alpha subunit of AS (TrpE) to produce anthranilate. In the absence of TrpG, TrpE can synthesize anthranilate directly from chorismate and high concentrations of ammonia. The sequence is that of Anthranilate synthase component 2 (trpG) from Methanothermobacter marburgensis (strain ATCC BAA-927 / DSM 2133 / JCM 14651 / NBRC 100331 / OCM 82 / Marburg) (Methanobacterium thermoautotrophicum).